Reading from the N-terminus, the 724-residue chain is Eukaryotic elongation factor 2 kinase (724 aa).

An N-acetylalanine modification is found at Ala2. Phosphoserine is present on Ser27. Ser61 is subject to Phosphoserine; by autocatalysis. A phosphoserine mark is found at Ser70, Ser73, and Ser77. The tract at residues 80-93 (FKEAWKHAIEKAKH) is calmodulin-binding. Residues 115 to 325 (RYNAVTGEWL…ICQSMGLTPF (211 aa)) form the Alpha-type protein kinase domain. The residue at position 242 (Ser242) is a Phosphoserine. 295–301 (GDGNLGV) provides a ligand contact to ATP. Thr347 and Thr352 each carry phosphothreonine; by autocatalysis. A disordered region spans residues 353–476 (EEKCGSPRIR…HESDEDSLGS (124 aa)). Ser358 is modified (phosphoserine; by MAPK13 and CDK1). Residues 358-376 (SPRIRTLSSSRPPLLLRLS) are compositionally biased toward low complexity. Phosphoserine; by autocatalysis, RPS6KA1 and RPS6KB1 is present on Ser365. A compositionally biased stretch (polar residues) spans 385–403 (SDVTFDSLPSSPSSATPHS). A Phosphoserine modification is found at Ser391. Ser397 bears the Phosphoserine; by AMPK mark. Composition is skewed to basic and acidic residues over residues 421-435 (GPRD…RDSE) and 444-469 (SEKR…RHES). Phosphoserine occurs at positions 434, 444, and 469. Ser473 bears the Phosphoserine; by autocatalysis mark. Ser476 carries the phosphoserine modification. The residue at position 499 (Ser499) is a Phosphoserine; by PKA.

This sequence belongs to the protein kinase superfamily. Alpha-type protein kinase family. In terms of assembly, monomer or homodimer. Interacts with Calmodulin/CALM1; this interaction is strictly required for phosphorylation activity. Post-translationally, autophosphorylated at multiple residues, Thr-347 being the major site. Phosphorylated by AMP-activated protein kinase AMPK at Ser-397 leading to EEF2K activation and protein synthesis inhibition. Phosphorylated by TRPM7 at Ser-77 resulting in improved protein stability, higher EE2F phosphorylated and subsequently reduced rate of protein synthesis. Phosphorylation by other kinases such as CDK1 and MAPK13 at Ser-358 or RPS6KA1 and RPS6KB1 at Ser-365 instead decrease EEF2K activity and promote protein synthesis. As to expression, ubiquitously expressed. Particularly abundant in skeletal muscle and heart.

It catalyses the reaction [translation elongation factor 2] + ATP = [translation elongation factor 2]-phosphate + ADP + H(+). Its activity is regulated as follows. Undergoes calcium/calmodulin-dependent intramolecular autophosphorylation, and this results in it becoming partially calcium/calmodulin-independent. Threonine kinase that regulates protein synthesis by controlling the rate of peptide chain elongation. Upon activation by a variety of upstream kinases including AMPK or TRPM7, phosphorylates the elongation factor EEF2 at a single site, renders it unable to bind ribosomes and thus inactive. In turn, the rate of protein synthesis is reduced. In Mus musculus (Mouse), this protein is Eukaryotic elongation factor 2 kinase (Eef2k).